Reading from the N-terminus, the 451-residue chain is UDP-N-acetylmuramate--L-alanine ligase (451 aa).

Residue 110 to 116 (GTHGKTT) participates in ATP binding.

It belongs to the MurCDEF family.

It localises to the cytoplasm. The catalysed reaction is UDP-N-acetyl-alpha-D-muramate + L-alanine + ATP = UDP-N-acetyl-alpha-D-muramoyl-L-alanine + ADP + phosphate + H(+). The protein operates within cell wall biogenesis; peptidoglycan biosynthesis. Functionally, cell wall formation. This chain is UDP-N-acetylmuramate--L-alanine ligase, found in Francisella tularensis subsp. novicida (strain U112).